Here is a 717-residue protein sequence, read N- to C-terminus: Fatty acid oxidation complex subunit alpha (717 aa).

The segment at 1-190 (MIHAGNAITV…KDGAVDAVVA (190 aa)) is enoyl-CoA hydratase/isomerase. Position 298 (aspartate 298) interacts with substrate. Residues 313–717 (HPVNQAAVLG…MAANNKKFYG (405 aa)) form a 3-hydroxyacyl-CoA dehydrogenase region. Residues methionine 326, aspartate 345, 402–404 (VTE), lysine 409, and serine 431 contribute to the NAD(+) site. Histidine 452 (for 3-hydroxyacyl-CoA dehydrogenase activity) is an active-site residue. Asparagine 455 serves as a coordination point for NAD(+). Asparagine 502 lines the substrate pocket.

The protein in the N-terminal section; belongs to the enoyl-CoA hydratase/isomerase family. This sequence in the C-terminal section; belongs to the 3-hydroxyacyl-CoA dehydrogenase family. As to quaternary structure, heterotetramer of two alpha chains (FadB) and two beta chains (FadA).

The enzyme catalyses a (3S)-3-hydroxyacyl-CoA + NAD(+) = a 3-oxoacyl-CoA + NADH + H(+). It carries out the reaction a (3S)-3-hydroxyacyl-CoA = a (2E)-enoyl-CoA + H2O. The catalysed reaction is a 4-saturated-(3S)-3-hydroxyacyl-CoA = a (3E)-enoyl-CoA + H2O. It catalyses the reaction (3S)-3-hydroxybutanoyl-CoA = (3R)-3-hydroxybutanoyl-CoA. The enzyme catalyses a (3Z)-enoyl-CoA = a 4-saturated (2E)-enoyl-CoA. It carries out the reaction a (3E)-enoyl-CoA = a 4-saturated (2E)-enoyl-CoA. Its pathway is lipid metabolism; fatty acid beta-oxidation. Its function is as follows. Involved in the aerobic and anaerobic degradation of long-chain fatty acids via beta-oxidation cycle. Catalyzes the formation of 3-oxoacyl-CoA from enoyl-CoA via L-3-hydroxyacyl-CoA. It can also use D-3-hydroxyacyl-CoA and cis-3-enoyl-CoA as substrate. This Acinetobacter baumannii (strain ACICU) protein is Fatty acid oxidation complex subunit alpha.